The primary structure comprises 137 residues: Small ribosomal subunit protein uS12 (137 aa).

The tract at residues 1–55 (MPTINQLVRKPRQSKSKKSDSPALNRNFNSKKKKFTDLNSPQKRGVCTRVGTMTP) is disordered. A 3-methylthioaspartic acid modification is found at Asp-102. Positions 118-137 (SGVDGRRQGRSLYGTKKPKK) are disordered.

Belongs to the universal ribosomal protein uS12 family. In terms of assembly, part of the 30S ribosomal subunit. Contacts proteins S8 and S17. May interact with IF1 in the 30S initiation complex.

With S4 and S5 plays an important role in translational accuracy. In terms of biological role, interacts with and stabilizes bases of the 16S rRNA that are involved in tRNA selection in the A site and with the mRNA backbone. Located at the interface of the 30S and 50S subunits, it traverses the body of the 30S subunit contacting proteins on the other side and probably holding the rRNA structure together. The combined cluster of proteins S8, S12 and S17 appears to hold together the shoulder and platform of the 30S subunit. The polypeptide is Small ribosomal subunit protein uS12 (Staphylococcus saprophyticus subsp. saprophyticus (strain ATCC 15305 / DSM 20229 / NCIMB 8711 / NCTC 7292 / S-41)).